A 617-amino-acid chain; its full sequence is Dihydroxy-acid dehydratase (617 aa).

Residue D82 participates in Mg(2+) binding. C123 contacts [2Fe-2S] cluster. Positions 124 and 125 each coordinate Mg(2+). K125 is modified (N6-carboxylysine). Position 197 (C197) interacts with [2Fe-2S] cluster. Residue E497 participates in Mg(2+) binding. The active-site Proton acceptor is S523.

Belongs to the IlvD/Edd family. Homodimer. [2Fe-2S] cluster serves as cofactor. Mg(2+) is required as a cofactor.

It catalyses the reaction (2R)-2,3-dihydroxy-3-methylbutanoate = 3-methyl-2-oxobutanoate + H2O. The catalysed reaction is (2R,3R)-2,3-dihydroxy-3-methylpentanoate = (S)-3-methyl-2-oxopentanoate + H2O. It participates in amino-acid biosynthesis; L-isoleucine biosynthesis; L-isoleucine from 2-oxobutanoate: step 3/4. The protein operates within amino-acid biosynthesis; L-valine biosynthesis; L-valine from pyruvate: step 3/4. Functions in the biosynthesis of branched-chain amino acids. Catalyzes the dehydration of (2R,3R)-2,3-dihydroxy-3-methylpentanoate (2,3-dihydroxy-3-methylvalerate) into 2-oxo-3-methylpentanoate (2-oxo-3-methylvalerate) and of (2R)-2,3-dihydroxy-3-methylbutanoate (2,3-dihydroxyisovalerate) into 2-oxo-3-methylbutanoate (2-oxoisovalerate), the penultimate precursor to L-isoleucine and L-valine, respectively. This chain is Dihydroxy-acid dehydratase, found in Streptomyces avermitilis (strain ATCC 31267 / DSM 46492 / JCM 5070 / NBRC 14893 / NCIMB 12804 / NRRL 8165 / MA-4680).